The primary structure comprises 313 residues: Ester hydrolase C11orf54 homolog (313 aa).

His264, His266, and His276 together coordinate Zn(2+).

In terms of assembly, monomer. The cofactor is Zn(2+).

The protein localises to the nucleus. It localises to the cytoplasm. Exhibits ester hydrolase activity on the substrate p-nitrophenyl acetate, in vitro. May regulate DNA damage and repair by regulating HIF1A degradation via chaperone-mediated autophagy (CMA). The protein is Ester hydrolase C11orf54 homolog of Xenopus tropicalis (Western clawed frog).